The following is a 388-amino-acid chain: Transcriptional regulatory protein EmbR (388 aa).

Residues 2-105 constitute a DNA-binding region (ompR/PhoB-type); sequence AGSATVEKRL…AAPPGYRLSI (104 aa). The region spanning 308–357 is the FHA domain; the sequence is TRIGRLHDNDIVLDSANVSRHHAVIVDTGTNYVINDLRSSNGVHVQHERI.

Belongs to the AfsR/DnrI/RedD regulatory family. Phosphorylated on threonine residue(s).

In terms of biological role, positively regulates the transcription of the embCAB operon. Exhibits ATPase and GTPase activities. In Mycobacterium bovis (strain ATCC BAA-935 / AF2122/97), this protein is Transcriptional regulatory protein EmbR (embR).